The sequence spans 453 residues: Flavonol-3-O-rhamnosyltransferase (453 aa).

Histidine 24 (proton acceptor) is an active-site residue. An anthocyanidin is bound at residue histidine 24. Aspartate 119 serves as the catalytic Charge relay. Histidine 150 provides a ligand contact to an anthocyanidin. Positions 280, 333, 350, 354, 355, and 358 each coordinate UDP-beta-L-rhamnose. Alanine 373 provides a ligand contact to an anthocyanidin.

The protein belongs to the UDP-glycosyltransferase family. Expressed in leaves, flowers, siliques, and stems. Expressed in the shoot apex.

The catalysed reaction is kaempferol + UDP-beta-L-rhamnose = kaempferol 3-O-alpha-L-rhamnoside + UDP + H(+). The enzyme catalyses UDP-beta-L-rhamnose + quercetin = quercitrin + UDP + H(+). It participates in flavonoid metabolism. Flavonol 3-O-rhamnosyltransferase that catalyzes the transfer of rhamnose from UDP-rhamnose to the 3-OH position of kaempferol and quercetin. Possesses low quercetin 3-O-glucosyltransferase activity in vitro. In Arabidopsis thaliana (Mouse-ear cress), this protein is Flavonol-3-O-rhamnosyltransferase.